A 416-amino-acid polypeptide reads, in one-letter code: Glutamate dehydrogenase A2 (416 aa).

Lys105 is a catalytic residue.

The protein belongs to the Glu/Leu/Phe/Val dehydrogenases family. In terms of assembly, homohexamer.

This is Glutamate dehydrogenase A2 (gdhA2) from Halobacterium salinarum (strain ATCC 700922 / JCM 11081 / NRC-1) (Halobacterium halobium).